The following is a 340-amino-acid chain: UDP-3-O-(3-hydroxymyristoyl)glucosamine N-acyltransferase (340 aa).

Histidine 239 serves as the catalytic Proton acceptor.

The protein belongs to the transferase hexapeptide repeat family. LpxD subfamily. In terms of assembly, homotrimer.

It carries out the reaction a UDP-3-O-[(3R)-3-hydroxyacyl]-alpha-D-glucosamine + a (3R)-hydroxyacyl-[ACP] = a UDP-2-N,3-O-bis[(3R)-3-hydroxyacyl]-alpha-D-glucosamine + holo-[ACP] + H(+). It catalyses the reaction UDP-3-O-[(3R)-3-hydroxytetradecanoyl]-alpha-D-glucosamine + (3R)-hydroxytetradecanoyl-[ACP] = UDP-2-N,3-O-bis[(3R)-3-hydroxytetradecanoyl]-alpha-D-glucosamine + holo-[ACP] + H(+). The protein operates within glycolipid biosynthesis; lipid IV(A) biosynthesis; lipid IV(A) from (3R)-3-hydroxytetradecanoyl-[acyl-carrier-protein] and UDP-N-acetyl-alpha-D-glucosamine: step 3/6. Functionally, catalyzes the N-acylation of UDP-3-O-(hydroxytetradecanoyl)glucosamine using 3-hydroxytetradecanoyl-ACP as the acyl donor. Is involved in the biosynthesis of lipid A, a phosphorylated glycolipid that anchors the lipopolysaccharide to the outer membrane of the cell. This is UDP-3-O-(3-hydroxymyristoyl)glucosamine N-acyltransferase from Sodalis glossinidius (strain morsitans).